The chain runs to 77 residues: Secapin (77 aa).

The first 32 residues, 1-32 (MKNYSKNATHLITVLLFSFVVILLIIPSKCEA), serve as a signal peptide directing secretion. Positions 33–52 (VSNDMQPLEARSADLVPEPR) are excised as a propeptide. The cysteines at positions 61 and 72 are disulfide-linked.

It belongs to the secapin family. As to expression, expressed by the venom gland.

The protein localises to the secreted. Its function is as follows. Serine protease inhibitor which exhibits antifibrinolytic, antielastolytic and antimicrobial activities. Displays antimicrobial activity against bacteria and fungi. Likely functions in the innate immune response to microbial infection and possibly in the venom, as an antifibrinolytic agent. Not toxic to mice but does induce slight sedation at higher doses (from 40 mg/kg). At a dose of 80 mg/kg, sedation occurs 15 minutes after injection and is accompanied by piloerection and hypothermia. The chain is Secapin from Apis mellifera (Honeybee).